Here is a 230-residue protein sequence, read N- to C-terminus: Orotidine 5'-phosphate decarboxylase (230 aa).

Substrate is bound by residues Asp11, Lys34, 61–70 (DLKLHDIPNT), Thr117, Arg179, Gln188, Gly208, and Arg209. Lys63 acts as the Proton donor in catalysis.

The protein belongs to the OMP decarboxylase family. Type 1 subfamily. As to quaternary structure, homodimer.

It carries out the reaction orotidine 5'-phosphate + H(+) = UMP + CO2. The protein operates within pyrimidine metabolism; UMP biosynthesis via de novo pathway; UMP from orotate: step 2/2. Functionally, catalyzes the decarboxylation of orotidine 5'-monophosphate (OMP) to uridine 5'-monophosphate (UMP). The sequence is that of Orotidine 5'-phosphate decarboxylase from Streptococcus pyogenes serotype M6 (strain ATCC BAA-946 / MGAS10394).